A 291-amino-acid polypeptide reads, in one-letter code: Undecaprenyl-diphosphatase 2 (291 aa).

A run of 6 helical transmembrane segments spans residues 39–59 (PGAA…LIYF), 85–105 (AQMG…GVTL), 118–138 (ITAT…RLAA), 203–223 (FLLA…DAAA), 231–251 (PTVF…AWFM), and 262–282 (FVWY…TGAL).

The protein belongs to the UppP family.

It localises to the cell membrane. The enzyme catalyses di-trans,octa-cis-undecaprenyl diphosphate + H2O = di-trans,octa-cis-undecaprenyl phosphate + phosphate + H(+). Catalyzes the dephosphorylation of undecaprenyl diphosphate (UPP). Confers resistance to bacitracin. The protein is Undecaprenyl-diphosphatase 2 of Streptomyces avermitilis (strain ATCC 31267 / DSM 46492 / JCM 5070 / NBRC 14893 / NCIMB 12804 / NRRL 8165 / MA-4680).